Consider the following 434-residue polypeptide: Alpha-enolase (434 aa).

Position 40 (Ser-40) interacts with Mg(2+). Residues His-158 and Glu-167 each coordinate substrate. The active-site Proton donor is the Glu-210. Asp-245, Glu-293, and Asp-318 together coordinate Mg(2+). Substrate-binding residues include Glu-293 and Asp-318. Lys-343 acts as the Proton acceptor in catalysis. Substrate is bound by residues 370 to 373 (SHRS) and Lys-394.

The protein belongs to the enolase family. In terms of assembly, homodimer. Requires Mg(2+) as cofactor.

The protein resides in the cytoplasm. The enzyme catalyses (2R)-2-phosphoglycerate = phosphoenolpyruvate + H2O. Its pathway is carbohydrate degradation; glycolysis; pyruvate from D-glyceraldehyde 3-phosphate: step 4/5. In terms of biological role, both an enzyme and a lens structural protein. The polypeptide is Alpha-enolase (ENO1) (Anas platyrhynchos (Mallard)).